Reading from the N-terminus, the 203-residue chain is Ras-related protein Rab-13 (203 aa).

Residues S17, G18, G20, K21, T22, C23, and T40 each contribute to the GTP site. T22 contributes to the Mg(2+) binding site. Positions 31 to 45 match the Switch 1 motif; that stretch reads DNFNNTYISTIGIDF. T40 provides a ligand contact to Mg(2+). Glycyl lysine isopeptide (Lys-Gly) (interchain with G-Cter in ubiquitin) cross-links involve residues K46 and K58. D63 serves as a coordination point for Mg(2+). The Switch 2 signature appears at 63 to 80; that stretch reads DTAGQERFKTITTAYYRG. 6 residues coordinate GTP: G66, N121, K122, D124, A152, and K153. Residues 173–203 are disordered; it reads SGGRRSGNHSKPSSTDLKPSDKKNTNKCSLG. S178 is subject to Phosphoserine. C200 is modified (cysteine methyl ester). C200 carries S-geranylgeranyl cysteine lipidation. A propeptide spans 201-203 (removed in mature form); sequence SLG.

The protein belongs to the small GTPase superfamily. Rab family. As to quaternary structure, interacts (GTP-bound form) with MICALL2; competes with RAB8A and is involved in tight junctions assembly. Interacts (GTP-bound form) with MICALL1. Interacts (GTP-bound form) with MICAL1, MICAL3, MICALCL, EHBP1 and EHBP1L1; ternary complexes of RAB8A, RAB13 and either MICAL1 or EHBP1L1 are possible. Interacts with PRKACA; downstream effector of RAB13 involved in tight junction assembly. Interacts with GRB2; may recruit RAB13 to the leading edge of migrating endothelial cells where it can activate RHOA. Interacts (isoprenylated form) with PDE6D; dissociates RAB13 from membranes. Interacts with BICDL2/BICDR2. Interacts with LEPROT and LEPROTL1. Mg(2+) is required as a cofactor. Post-translationally, ubiquitinated via 'Lys-11'-linked ubiquitination on Lys-46 and Lys-58; impairing the recruitment of guanosine diphosphate (GDP) dissociation inhibitor 1/GDI1.

It is found in the cell membrane. The protein localises to the cytoplasmic vesicle membrane. It localises to the cell junction. Its subcellular location is the tight junction. The protein resides in the golgi apparatus. It is found in the trans-Golgi network membrane. The protein localises to the recycling endosome membrane. It localises to the cell projection. Its subcellular location is the lamellipodium. It catalyses the reaction GTP + H2O = GDP + phosphate + H(+). With respect to regulation, regulated by guanine nucleotide exchange factors (GEFs) including DENND1C, which promote the exchange of bound GDP for free GTP. Regulated by GTPase activating proteins (GAPs) which increase the GTP hydrolysis activity. Inhibited by GDP dissociation inhibitors (GDIs). Activated in response to insulin. Functionally, the small GTPases Rab are key regulators of intracellular membrane trafficking, from the formation of transport vesicles to their fusion with membranes. Rabs cycle between an inactive GDP-bound form and an active GTP-bound form that is able to recruit to membranes different sets of downstream effectors directly responsible for vesicle formation, movement, tethering and fusion. RAB13 is involved in endocytic recycling and regulates the transport to the plasma membrane of transmembrane proteins like the tight junction protein OCLN/occludin. Thereby, it regulates the assembly and the activity of tight junctions. Moreover, it may also regulate tight junction assembly by activating the PKA signaling pathway and by reorganizing the actin cytoskeleton through the activation of the downstream effectors PRKACA and MICALL2 respectively. Through its role in tight junction assembly, may play a role in the establishment of Sertoli cell barrier. Plays also a role in angiogenesis through regulation of endothelial cells chemotaxis. Also involved in neurite outgrowth. Has also been proposed to play a role in post-Golgi membrane trafficking from the TGN to the recycling endosome. Finally, it has been involved in insulin-induced transport to the plasma membrane of the glucose transporter GLUT4 and therefore may play a role in glucose homeostasis. The protein is Ras-related protein Rab-13 (RAB13) of Mesocricetus auratus (Golden hamster).